Reading from the N-terminus, the 225-residue chain is Putative ankyrin repeat protein RBE_1025 (225 aa).

ANK repeat units follow at residues 6 to 35 (LSKDLLLSARANNNLAVIRILQDTTSAINP), 41 to 71 (NGKTALHWAVINLNPLITCYILKIEKVNVNI), 75 to 120 (TGFT…DVNI), and 124 to 153 (KGNTALHYAICKNNFFFIEELLSNNASPFI).

The sequence is that of Putative ankyrin repeat protein RBE_1025 from Rickettsia bellii (strain RML369-C).